The following is a 546-amino-acid chain: MSKFVFVTGGVVSSIGKGIVAASLGRLLKSRDYSVSILKLDPYINVDPGTMSPFQHGEVFVTDDGAETDLDLGHYERFTDTELSRLNSVTTGSIYQAVLNKERRGAYMGGTVQVIPHVTNEIKERILRVAKDTNPDIVITEIGGTVGDIESLPFLEAIRQFRKDVGRNNVVYMHVTLIPWIPAAKEMKTKPTQHSVKELRSIGIQPDVLVCRCHLPLQPGLKEKLSAFCDVPVESVITAQDASSIYEVPLNLEKEGLAQQTLELLNLGPRYPHLEEWENLIRQMQSPGQKLEIAIVGKYVQLGDAYLSVVEALKHAAIALNSEIELRWVSAEDVDNDSAEAHLSGVDGIVVPGGFGIRGVDGKIKAIEYARVNNIPFLGLCLGMQCSIIEWGRNVARLERANSSEFEEDTPNPVINLLPEQADVVDLGGTMRLGLYPCRLNPDSLAFSLYGQEVIYERHRHRYEFNNAYRSLFFETGYLVSGTSPDGRLVEIIELPKHPFFIATQFHPEFRSRPNKAHPLFSGFMKAALKGREEKFSLSSQHSAVS.

The amidoligase domain stretch occupies residues 1-267 (MSKFVFVTGG…AQQTLELLNL (267 aa)). Ser13 contributes to the CTP binding site. Ser13 lines the UTP pocket. ATP contacts are provided by residues 14–19 (SIGKGI) and Asp71. Residues Asp71 and Glu141 each contribute to the Mg(2+) site. CTP is bound by residues 148 to 150 (DIE), 188 to 193 (KTKPTQ), and Lys224. UTP contacts are provided by residues 188–193 (KTKPTQ) and Lys224. One can recognise a Glutamine amidotransferase type-1 domain in the interval 292 to 534 (EIAIVGKYVQ…MKAALKGREE (243 aa)). Gly354 is an L-glutamine binding site. Cys381 serves as the catalytic Nucleophile; for glutamine hydrolysis. L-glutamine is bound by residues 382 to 385 (LGMQ), Glu405, and Arg462. Catalysis depends on residues His507 and Glu509.

Belongs to the CTP synthase family. As to quaternary structure, homotetramer.

The catalysed reaction is UTP + L-glutamine + ATP + H2O = CTP + L-glutamate + ADP + phosphate + 2 H(+). The enzyme catalyses L-glutamine + H2O = L-glutamate + NH4(+). It carries out the reaction UTP + NH4(+) + ATP = CTP + ADP + phosphate + 2 H(+). It participates in pyrimidine metabolism; CTP biosynthesis via de novo pathway; CTP from UDP: step 2/2. Allosterically activated by GTP, when glutamine is the substrate; GTP has no effect on the reaction when ammonia is the substrate. The allosteric effector GTP functions by stabilizing the protein conformation that binds the tetrahedral intermediate(s) formed during glutamine hydrolysis. Inhibited by the product CTP, via allosteric rather than competitive inhibition. In terms of biological role, catalyzes the ATP-dependent amination of UTP to CTP with either L-glutamine or ammonia as the source of nitrogen. Regulates intracellular CTP levels through interactions with the four ribonucleotide triphosphates. The sequence is that of CTP synthase from Microcystis aeruginosa (strain NIES-843 / IAM M-2473).